Consider the following 393-residue polypeptide: Dwarfin sma-3 (393 aa).

In terms of domain architecture, MH1 spans 10–139 (PAVKKLLGWK…YQRLSRPQGL (130 aa)). Zn(2+) contacts are provided by Cys-65, Cys-110, Cys-124, and His-129. Positions 136-190 (PQGLNSSMPSPQPISSPNTIWQSSGSSTASCASSPSPSVFSEDGGEVQVHQRPPP) are disordered. A compositionally biased stretch (low complexity) spans 141 to 176 (SSMPSPQPISSPNTIWQSSGSSTASCASSPSPSVFS). Residues 197–393 (WAQITYFELN…TNLMEPNSMT (197 aa)) form the MH2 domain.

It belongs to the dwarfin/SMAD family.

It localises to the cytoplasm. Its subcellular location is the nucleus. In terms of biological role, involved in TGF-beta pathway. Plays a role in male tail tip morphogenesis. The sequence is that of Dwarfin sma-3 from Caenorhabditis elegans.